The sequence spans 613 residues: Sulfhydryl oxidase 1 (613 aa).

A signal peptide spans 1–30; that stretch reads MTGCGRRSGWLPPLRLLLLPLLLGGPGVGA. Positions 37–157 constitute a Thioredoxin domain; sequence YSASDPLTLL…RERLIDALES (121 aa). Active-site nucleophile residues include Cys-71 and Cys-74. Cystine bridges form between Cys-71-Cys-74 and Cys-102-Cys-111. 2 N-linked (GlcNAc...) asparagine glycosylation sites follow: Asn-131 and Asn-244. A disulfide bond links Cys-394 and Cys-406. The 108-residue stretch at 397–504 folds into the ERV/ALR sulfhydryl oxidase domain; the sequence is SESHFRGFPC…EDPQFPKVQW (108 aa). Residues Arg-402, Trp-409, and His-413 each coordinate FAD. The residue at position 427 (Ser-427) is a Phosphoserine. A disulfide bridge connects residues Cys-450 and Cys-453. Residues Asp-452, His-456, 479–486, Lys-501, and Trp-504 each bind FAD; that span reads WTSHNRVN. A disulfide bond links Cys-510 and Cys-513.

This sequence belongs to the quiescin-sulfhydryl oxidase (QSOX) family. Monomer. It depends on FAD as a cofactor. Post-translationally, N-glycosylated. O-glycosylated on Thr and Ser residues. In terms of tissue distribution, detected in endometrium and in uterus glandular epithelial cells (at protein level). Expressed in testis, placenta, pancreas, lung, ovary, endometrium, but not in brain, liver and kidney tissues. Higher expression in epithelial cells.

The protein resides in the secreted. The catalysed reaction is 2 R'C(R)SH + O2 = R'C(R)S-S(R)CR' + H2O2. In terms of biological role, catalyzes the oxidation of sulfhydryl groups in peptide and protein thiols to disulfides with the reduction of oxygen to hydrogen peroxide. Plays a role in disulfide bond formation in a variety of extracellular proteins. In fibroblasts, required for normal incorporation of laminin into the extracellular matrix, and thereby for normal cell-cell adhesion and cell migration. This is Sulfhydryl oxidase 1 (QSOX1) from Cavia porcellus (Guinea pig).